The following is a 748-amino-acid chain: Bifunctional lysine-specific demethylase and histidyl-hydroxylase NO66 (748 aa).

Disordered regions lie at residues 65–135 (NIDR…RSTY) and 160–264 (TEVV…DDEG). Basic and acidic residues predominate over residues 94-110 (LENKKPKVEVKKEDEKS). The span at 124–134 (LVQNETSTRST) shows a compositional bias: polar residues. Positions 163–193 (VESDDEQMIGLDSDEELEDEDETDIDEDEMM) are enriched in acidic residues. A compositionally biased stretch (basic and acidic residues) spans 194 to 203 (IDPKDIERYI). Acidic residues predominate over residues 207-264 (SVEDEEDMEDEEIEDEEFEDEEFEDEEEEADEQEEEEEDVSDEESVVSEMDADSDDEG). One can recognise a JmjC domain in the interval 399 to 543 (QLVNPQTYDD…NLMEKVVPEA (145 aa)). Positions 442, 444, and 509 each coordinate Fe cation.

This sequence belongs to the ROX family. NO66 subfamily. Fe(2+) serves as cofactor.

It is found in the nucleus. It carries out the reaction N(6),N(6)-dimethyl-L-lysyl(36)-[histone H3] + 2 2-oxoglutarate + 2 O2 = L-lysyl(36)-[histone H3] + 2 formaldehyde + 2 succinate + 2 CO2. Its function is as follows. Oxygenase that can act as both a histone lysine demethylase and a ribosomal histidine hydroxylase. Specifically demethylates 'Lys-4' (H3K4me) and 'Lys-36' (H3K36me) of histone H3, thereby playing a central role in histone code. Mediates response to multiple stress stimuli, including heat shock and osmotic, oxidative, and ethanol stress. The sequence is that of Bifunctional lysine-specific demethylase and histidyl-hydroxylase NO66 (jmjc-1) from Caenorhabditis elegans.